Consider the following 102-residue polypeptide: EPIDERMAL PATTERNING FACTOR-like protein 9 (102 aa).

The N-terminal stretch at M1–A31 is a signal peptide. 3 disulfide bridges follow: C65-C98, C70-C77, and C73-C100.

This sequence belongs to the plant cysteine rich small secretory peptide family. Epidermal patterning factor subfamily. As to quaternary structure, interacts with ERECTA and TMM. Expressed in immature organs, including leaves, stems and flower buds, but not in roots, shoot apical meristem and petals. Detected in the mesophyll tissues but not in the epidermal tissues where stomata develop.

The protein resides in the secreted. The protein localises to the extracellular space. Its subcellular location is the apoplast. Positively regulates stomatal density and patterning. Acts by competing with EPF2 (AC Q8LC53) for the same receptors, ERECTA (AC Q42371) and TMM (AC Q9SSD1). Not cleaved by the protease CRSP (AC Q9LNU1). This Arabidopsis thaliana (Mouse-ear cress) protein is EPIDERMAL PATTERNING FACTOR-like protein 9.